The sequence spans 221 residues: Guanylate kinase (221 aa).

The Guanylate kinase-like domain maps to 20-199 (GLMFILSSPS…CFGKVREILA (180 aa)). 27–34 (SPSGAGKT) provides a ligand contact to ATP.

It belongs to the guanylate kinase family.

It is found in the cytoplasm. It catalyses the reaction GMP + ATP = GDP + ADP. In terms of biological role, essential for recycling GMP and indirectly, cGMP. This chain is Guanylate kinase, found in Novosphingobium aromaticivorans (strain ATCC 700278 / DSM 12444 / CCUG 56034 / CIP 105152 / NBRC 16084 / F199).